Reading from the N-terminus, the 160-residue chain is Large ribosomal subunit protein uL11 (160 aa).

Belongs to the universal ribosomal protein uL11 family. As to quaternary structure, part of the ribosomal stalk of the 50S ribosomal subunit. Interacts with L10 and the large rRNA to form the base of the stalk. L10 forms an elongated spine to which L12 dimers bind in a sequential fashion forming a multimeric L10(L12)X complex.

Its function is as follows. Forms part of the ribosomal stalk which helps the ribosome interact with GTP-bound translation factors. The protein is Large ribosomal subunit protein uL11 of Methanothermobacter thermautotrophicus (strain ATCC 29096 / DSM 1053 / JCM 10044 / NBRC 100330 / Delta H) (Methanobacterium thermoautotrophicum).